The following is a 224-amino-acid chain: Serum amyloid P-component (224 aa).

Residues 1–20 (MDKLLLWMFVFTSLLSEAFC) form the signal peptide. The Pentraxin (PTX) domain occupies 25-224 (KRKVFVFPRE…YVVIRPRVWD (200 aa)). The N-linked (GlcNAc...) asparagine glycan is linked to Asn-52. Residues Cys-56 and Cys-115 are joined by a disulfide bond. 6 residues coordinate Ca(2+): Asp-78, Asn-79, Glu-156, Gln-157, Asp-158, and Gln-168.

The protein belongs to the pentraxin family. Homopentamer. Pentraxin (or pentaxin) have a discoid arrangement of 5 non-covalently bound subunits. The cofactor is Ca(2+).

The protein resides in the secreted. This Mus musculus (Mouse) protein is Serum amyloid P-component (Apcs).